Here is a 704-residue protein sequence, read N- to C-terminus: Elongation factor G (704 aa).

The 277-residue stretch at Lys-10–Met-286 folds into the tr-type G domain. Residues Ala-19–Thr-26, Asp-83–His-87, and Asn-137–Asp-140 contribute to the GTP site.

Belongs to the TRAFAC class translation factor GTPase superfamily. Classic translation factor GTPase family. EF-G/EF-2 subfamily.

The protein localises to the cytoplasm. Catalyzes the GTP-dependent ribosomal translocation step during translation elongation. During this step, the ribosome changes from the pre-translocational (PRE) to the post-translocational (POST) state as the newly formed A-site-bound peptidyl-tRNA and P-site-bound deacylated tRNA move to the P and E sites, respectively. Catalyzes the coordinated movement of the two tRNA molecules, the mRNA and conformational changes in the ribosome. This chain is Elongation factor G, found in Corynebacterium jeikeium (strain K411).